A 152-amino-acid chain; its full sequence is Protein SprT-like (152 aa).

In terms of domain architecture, SprT-like spans 7-148 (QRLVEEVSLQ…GKCKGKLNLI (142 aa)). H67 contributes to the Zn(2+) binding site. E68 is an active-site residue. H71 is a binding site for Zn(2+).

The protein belongs to the SprT family. The cofactor is Zn(2+).

Its subcellular location is the cytoplasm. This is Protein SprT-like from Bacillus anthracis (strain A0248).